An 835-amino-acid polypeptide reads, in one-letter code: Phenylalanine--tRNA ligase beta subunit (835 aa).

The 117-residue stretch at 44–160 (PETTGPLVFG…SYGEPGEDAR (117 aa)) folds into the tRNA-binding domain. The B5 domain occupies 419 to 494 (PAMQPITMKV…RLEGLEAIPT (76 aa)). Mg(2+) contacts are provided by D472, D478, E481, and E482. Residues 741 to 834 (SSFPALHQDI…AKEKFNAEMR (94 aa)) enclose the FDX-ACB domain.

Belongs to the phenylalanyl-tRNA synthetase beta subunit family. Type 1 subfamily. As to quaternary structure, tetramer of two alpha and two beta subunits. Mg(2+) serves as cofactor.

Its subcellular location is the cytoplasm. It catalyses the reaction tRNA(Phe) + L-phenylalanine + ATP = L-phenylalanyl-tRNA(Phe) + AMP + diphosphate + H(+). This is Phenylalanine--tRNA ligase beta subunit from Corynebacterium glutamicum (strain ATCC 13032 / DSM 20300 / JCM 1318 / BCRC 11384 / CCUG 27702 / LMG 3730 / NBRC 12168 / NCIMB 10025 / NRRL B-2784 / 534).